The primary structure comprises 156 residues: MSRRHAAEKRQVLPDAKFGDMVLTKFMNNLMIDGKKAVAERIVYNAFDRVEGKLKRAPVEVFHEALENIKPAVEVRSRRVGGATYQVPVDVRPERREALAIRWLINASRARNENTMEERLAGELVDAVNMRGSAVKKREDTHKMADANRAFSHYRW.

Belongs to the universal ribosomal protein uS7 family. Part of the 30S ribosomal subunit. Contacts proteins S9 and S11.

Functionally, one of the primary rRNA binding proteins, it binds directly to 16S rRNA where it nucleates assembly of the head domain of the 30S subunit. Is located at the subunit interface close to the decoding center, probably blocks exit of the E-site tRNA. This Jannaschia sp. (strain CCS1) protein is Small ribosomal subunit protein uS7.